The chain runs to 480 residues: Histone deacetylase 1 (480 aa).

The histone deacetylase stretch occupies residues 9-321; sequence RKVCYYYDGD…WTYETAVALD (313 aa). Glycine 27 and lysine 31 together coordinate 1D-myo-inositol 1,4,5,6-tetrakisphosphate. Histidine 141 is a catalytic residue. Residues aspartate 176, histidine 178, and aspartate 264 each coordinate Zn(2+). A 1D-myo-inositol 1,4,5,6-tetrakisphosphate-binding site is contributed by arginine 270. A disordered region spans residues 376 to 480; the sequence is APGVQMQPIP…KGVKEETKST (105 aa). Positions 388–400 are enriched in acidic residues; that stretch reads AVQEDSGDEEEED. The span at 401 to 416 shows a compositional bias: basic and acidic residues; it reads PEKRISIRNSDKRISC. A compositionally biased stretch (acidic residues) spans 417-427; that stretch reads DEEFSDSEDEG. Positions 455-480 are enriched in basic and acidic residues; the sequence is KDEKEEEKAKEEKAEPKGVKEETKST.

Belongs to the histone deacetylase family. HD type 1 subfamily. It depends on Zn(2+) as a cofactor.

It localises to the nucleus. It carries out the reaction N(6)-acetyl-L-lysyl-[histone] + H2O = L-lysyl-[histone] + acetate. It catalyses the reaction N(6)-acetyl-L-lysyl-[protein] + H2O = L-lysyl-[protein] + acetate. The catalysed reaction is N(6)-(2E)-butenoyl-L-lysyl-[protein] + H2O = (2E)-2-butenoate + L-lysyl-[protein]. The enzyme catalyses N(6)-[(S)-lactoyl]-L-lysyl-[protein] + H2O = (S)-lactate + L-lysyl-[protein]. With respect to regulation, inositol tetraphosphate (1D-myo-inositol 1,4,5,6-tetrakisphosphate) may act as an intermolecular glue between HDAC1 and N-Cor repressor complex components. Histone deacetylase that catalyzes the deacetylation of lysine residues on the N-terminal part of the core histones (H2A, H2B, H3 and H4). Histone deacetylation gives a tag for epigenetic repression and plays an important role in transcriptional regulation, cell cycle progression and developmental events. Histone deacetylases act via the formation of large multiprotein complexes. Also functions as a deacetylase for non-histone proteins. In addition to protein deacetylase activity, also has protein-lysine deacylase activity: acts as a protein decrotonylase and delactylase by mediating decrotonylation ((2E)-butenoyl) and delactylation (lactoyl) of histones, respectively. The protein is Histone deacetylase 1 (HDAC1) of Gallus gallus (Chicken).